The sequence spans 441 residues: Ubiquitin carboxyl-terminal hydrolase MINDY-3 (441 aa).

Catalysis depends on cysteine 51, which acts as the Nucleophile. The Proton acceptor role is filled by histidine 284.

This sequence belongs to the MINDY deubiquitinase family. FAM188 subfamily.

The protein localises to the nucleus. It catalyses the reaction Thiol-dependent hydrolysis of ester, thioester, amide, peptide and isopeptide bonds formed by the C-terminal Gly of ubiquitin (a 76-residue protein attached to proteins as an intracellular targeting signal).. Its function is as follows. Hydrolase that can remove 'Lys-48'-linked conjugated ubiquitin from proteins. The sequence is that of Ubiquitin carboxyl-terminal hydrolase MINDY-3 (mindy3) from Xenopus tropicalis (Western clawed frog).